The following is a 101-amino-acid chain: Fructose-bisphosphate aldolase (101 aa).

The active-site Schiff-base intermediate with dihydroxyacetone-P is the Lys11.

The protein belongs to the class I fructose-bisphosphate aldolase family.

It carries out the reaction beta-D-fructose 1,6-bisphosphate = D-glyceraldehyde 3-phosphate + dihydroxyacetone phosphate. Its pathway is carbohydrate degradation; glycolysis; D-glyceraldehyde 3-phosphate and glycerone phosphate from D-glucose: step 4/4. This chain is Fructose-bisphosphate aldolase, found in Lymnaea stagnalis (Great pond snail).